Consider the following 170-residue polypeptide: CASP-like protein 1F1 (170 aa).

Topologically, residues Met1–Gly16 are cytoplasmic. Residues Val17–Ile37 traverse the membrane as a helical segment. Residues Thr38–Tyr62 lie on the Extracellular side of the membrane. Residues Leu63 to Leu83 form a helical membrane-spanning segment. Residues Ala84–Arg88 lie on the Cytoplasmic side of the membrane. Residues Gly89–Phe109 form a helical membrane-spanning segment. At Ser110–Arg141 the chain is on the extracellular side. A helical transmembrane segment spans residues Val142–Leu162. Residues Thr163–Tyr170 lie on the Cytoplasmic side of the membrane.

Belongs to the Casparian strip membrane proteins (CASP) family. Homodimer and heterodimers.

It is found in the cell membrane. The sequence is that of CASP-like protein 1F1 from Arabidopsis lyrata subsp. lyrata (Lyre-leaved rock-cress).